The primary structure comprises 202 residues: MAETAASRTGSVSRKTNETSISVSVNLDGTGKSKISTGVGFFDHMLDQLSRHSLIDMEIESQGDLHIDDHHTVEDTGIAIGQAISKALGDRRGITRYASIDLAMDETMTKAAVDLSGRPFLVWNVAFSAPKIGTFDTELVREFFQALAQNAGITLHILNHYGANNHHIAETCFKAVARALRTATEIDPRQVGRVPSTKGTLV.

This sequence belongs to the imidazoleglycerol-phosphate dehydratase family.

It localises to the cytoplasm. It carries out the reaction D-erythro-1-(imidazol-4-yl)glycerol 3-phosphate = 3-(imidazol-4-yl)-2-oxopropyl phosphate + H2O. The protein operates within amino-acid biosynthesis; L-histidine biosynthesis; L-histidine from 5-phospho-alpha-D-ribose 1-diphosphate: step 6/9. This chain is Imidazoleglycerol-phosphate dehydratase, found in Rhizobium leguminosarum bv. trifolii (strain WSM2304).